The chain runs to 320 residues: Lipoyl synthase (320 aa).

Positions 56, 61, 67, 82, 86, 89, and 295 each coordinate [4Fe-4S] cluster. One can recognise a Radical SAM core domain in the interval 68–284 (WNRRTATFMI…REEALKRGFA (217 aa)). Residues 300–320 (EQSAQAVARRTGAGRAAQTGD) are disordered. The segment covering 303-320 (AQAVARRTGAGRAAQTGD) has biased composition (low complexity).

The protein belongs to the radical SAM superfamily. Lipoyl synthase family. It depends on [4Fe-4S] cluster as a cofactor.

The protein localises to the cytoplasm. It carries out the reaction [[Fe-S] cluster scaffold protein carrying a second [4Fe-4S](2+) cluster] + N(6)-octanoyl-L-lysyl-[protein] + 2 oxidized [2Fe-2S]-[ferredoxin] + 2 S-adenosyl-L-methionine + 4 H(+) = [[Fe-S] cluster scaffold protein] + N(6)-[(R)-dihydrolipoyl]-L-lysyl-[protein] + 4 Fe(3+) + 2 hydrogen sulfide + 2 5'-deoxyadenosine + 2 L-methionine + 2 reduced [2Fe-2S]-[ferredoxin]. It participates in protein modification; protein lipoylation via endogenous pathway; protein N(6)-(lipoyl)lysine from octanoyl-[acyl-carrier-protein]: step 2/2. Its function is as follows. Catalyzes the radical-mediated insertion of two sulfur atoms into the C-6 and C-8 positions of the octanoyl moiety bound to the lipoyl domains of lipoate-dependent enzymes, thereby converting the octanoylated domains into lipoylated derivatives. This chain is Lipoyl synthase, found in Symbiobacterium thermophilum (strain DSM 24528 / JCM 14929 / IAM 14863 / T).